A 239-amino-acid chain; its full sequence is Probable inner membrane transporter protein TsaS (239 aa).

The next 4 membrane-spanning stretches (helical) occupy residues 65–85, 128–148, 160–180, and 186–206; these read AIGA…WLMG, GLVG…IALL, ATVP…LFGA, and AHTF…VVLG.

This sequence belongs to the 4-toluene sulfonate uptake permease (TSUP) (TC 2.A.102) family. Part of a two-component transport system composed of TsaT and TsaS.

Its subcellular location is the cell inner membrane. Involved in the uptake of p-toluenesulphonate (TSA). This is Probable inner membrane transporter protein TsaS (tsaS) from Comamonas testosteroni (Pseudomonas testosteroni).